The sequence spans 1186 residues: Trafficking protein particle complex II-specific subunit 120 homolog (1186 aa).

Disordered stretches follow at residues 777-824 (PTDS…EKES) and 964-984 (TKDP…SEKN). Positions 779–792 (DSDNTMSSGRNAAG) are enriched in polar residues. The residue at position 971 (Ser971) is a Phosphoserine. Residues 972–981 (PSSSRNPSFS) show a composition bias toward low complexity.

Belongs to the TRS120 family. In terms of assembly, part of the multisubunit TRAPP (transport protein particle) II complex composed of BET3, BET5, TRS20, TRS23, TRS31, TRS33, TRS65, TRS85, TRS120 and TRS130. Expressed in roots, leaves, stems and flowers.

Its subcellular location is the golgi apparatus. The protein resides in the trans-Golgi network. It is found in the early endosome. Functionally, specific subunit of the TRAPP II complex, a highly conserved vesicle tethering complex that is required for the proper transport of proteins in post-Golgi trafficking pathways to the growing cell plate in mitotic active cells. Required for the polarized and selective transport of PIN2 and probably PIN1 to the plasma membrane. Not required for ER-to-Golgi as well as biosynthetic and endocytic vacuolar transport. This chain is Trafficking protein particle complex II-specific subunit 120 homolog, found in Arabidopsis thaliana (Mouse-ear cress).